The chain runs to 174 residues: Interferon gamma (174 aa).

An N-terminal signal peptide occupies residues M1–G23. A Pyrrolidone carboxylic acid modification is found at Q24. N-linked (GlcNAc...) asparagine glycosylation is found at N39 and N106.

It belongs to the type II (or gamma) interferon family. Homodimer. Interacts with IFNGR1 (via extracellular domain); this interaction promotes IFNGR1 dimerization. Released primarily from activated T lymphocytes.

Its subcellular location is the secreted. Type II interferon produced by immune cells such as T-cells and NK cells that plays crucial roles in antimicrobial, antiviral, and antitumor responses by activating effector immune cells and enhancing antigen presentation. Primarily signals through the JAK-STAT pathway after interaction with its receptor IFNGR1 to affect gene regulation. Upon IFNG binding, IFNGR1 intracellular domain opens out to allow association of downstream signaling components JAK2, JAK1 and STAT1, leading to STAT1 activation, nuclear translocation and transcription of IFNG-regulated genes. Many of the induced genes are transcription factors such as IRF1 that are able to further drive regulation of a next wave of transcription. Plays a role in class I antigen presentation pathway by inducing a replacement of catalytic proteasome subunits with immunoproteasome subunits. In turn, increases the quantity, quality, and repertoire of peptides for class I MHC loading. Increases the efficiency of peptide generation also by inducing the expression of activator PA28 that associates with the proteasome and alters its proteolytic cleavage preference. Up-regulates as well MHC II complexes on the cell surface by promoting expression of several key molecules such as cathepsins B/CTSB, H/CTSH, and L/CTSL. Participates in the regulation of hematopoietic stem cells during development and under homeostatic conditions by affecting their development, quiescence, and differentiation. In Phodopus sungorus (Striped hairy-footed hamster), this protein is Interferon gamma (IFNG).